Here is a 338-residue protein sequence, read N- to C-terminus: UDP-3-O-acylglucosamine N-acyltransferase (338 aa).

Histidine 239 serves as the catalytic Proton acceptor.

It belongs to the transferase hexapeptide repeat family. LpxD subfamily. As to quaternary structure, homotrimer.

It catalyses the reaction a UDP-3-O-[(3R)-3-hydroxyacyl]-alpha-D-glucosamine + a (3R)-hydroxyacyl-[ACP] = a UDP-2-N,3-O-bis[(3R)-3-hydroxyacyl]-alpha-D-glucosamine + holo-[ACP] + H(+). It participates in bacterial outer membrane biogenesis; LPS lipid A biosynthesis. Its function is as follows. Catalyzes the N-acylation of UDP-3-O-acylglucosamine using 3-hydroxyacyl-ACP as the acyl donor. Is involved in the biosynthesis of lipid A, a phosphorylated glycolipid that anchors the lipopolysaccharide to the outer membrane of the cell. This chain is UDP-3-O-acylglucosamine N-acyltransferase, found in Xylella fastidiosa (strain M12).